We begin with the raw amino-acid sequence, 172 residues long: Adenylate kinase isoenzyme 6 (172 aa).

Residues Gly13, Gly15, Lys16, Thr17, and Thr18 each coordinate ATP. The tract at residues 33-56 is NMPbind; the sequence is NVGDLAREGQLYDGYDEEYDCPIL. Residues 108-118 form an LID region; the sequence is NRGYNEKKLKD. ATP is bound by residues Arg109 and Lys148.

Belongs to the adenylate kinase family. AK6 subfamily. In terms of assembly, monomer and homodimer. Interacts with small ribosomal subunit protein uS11. Not a structural component of 43S pre-ribosomes, but transiently interacts with them by binding to uS11. Interacts with COIL (via C-terminus).

The protein localises to the cytoplasm. Its subcellular location is the nucleus. The protein resides in the nucleoplasm. It localises to the cajal body. It catalyses the reaction AMP + ATP = 2 ADP. The catalysed reaction is ATP + H2O = ADP + phosphate + H(+). Broad-specificity nucleoside monophosphate (NMP) kinase that catalyzes the reversible transfer of the terminal phosphate group between nucleoside triphosphates and monophosphates. Also has ATPase activity. Involved in the late cytoplasmic maturation steps of the 40S ribosomal particles, specifically 18S rRNA maturation. While NMP activity is not required for ribosome maturation, ATPase activity is. Associates transiently with small ribosomal subunit protein uS11. ATP hydrolysis breaks the interaction with uS11. May temporarily remove uS11 from the ribosome to enable a conformational change of the ribosomal RNA that is needed for the final maturation step of the small ribosomal subunit. Its NMP activity may have a role in nuclear energy homeostasis. May be involved in regulation of Cajal body (CB) formation. The sequence is that of Adenylate kinase isoenzyme 6 from Bos taurus (Bovine).